Reading from the N-terminus, the 310-residue chain is UDP-N-acetylenolpyruvoylglucosamine reductase (310 aa).

The FAD-binding PCMH-type domain occupies 34–211 (TGGPAQCVYV…REDMGKIAQE (178 aa)). Arginine 177 is a catalytic residue. Catalysis depends on serine 225, which acts as the Proton donor. Residue glutamate 295 is part of the active site.

Belongs to the MurB family. FAD serves as cofactor.

Its subcellular location is the cytoplasm. The catalysed reaction is UDP-N-acetyl-alpha-D-muramate + NADP(+) = UDP-N-acetyl-3-O-(1-carboxyvinyl)-alpha-D-glucosamine + NADPH + H(+). Its pathway is cell wall biogenesis; peptidoglycan biosynthesis. Its function is as follows. Cell wall formation. This Beijerinckia indica subsp. indica (strain ATCC 9039 / DSM 1715 / NCIMB 8712) protein is UDP-N-acetylenolpyruvoylglucosamine reductase.